The chain runs to 224 residues: Ribonuclease HII (224 aa).

Residues 1-210 form the RNase H type-2 domain; that stretch reads MKIGGIDEAG…VRKIEESIKA (210 aa). A divalent metal cation contacts are provided by Asp-7, Glu-8, and Asp-105.

This sequence belongs to the RNase HII family. The cofactor is Mn(2+). Mg(2+) is required as a cofactor.

It is found in the cytoplasm. It carries out the reaction Endonucleolytic cleavage to 5'-phosphomonoester.. In terms of biological role, endonuclease that specifically degrades the RNA of RNA-DNA hybrids. This is Ribonuclease HII from Pyrococcus furiosus (strain ATCC 43587 / DSM 3638 / JCM 8422 / Vc1).